The primary structure comprises 156 residues: Small ribosomal subunit protein uS7 (156 aa).

Belongs to the universal ribosomal protein uS7 family. In terms of assembly, part of the 30S ribosomal subunit. Contacts proteins S9 and S11.

Its function is as follows. One of the primary rRNA binding proteins, it binds directly to 16S rRNA where it nucleates assembly of the head domain of the 30S subunit. Is located at the subunit interface close to the decoding center, probably blocks exit of the E-site tRNA. This chain is Small ribosomal subunit protein uS7, found in Solibacter usitatus (strain Ellin6076).